Here is a 284-residue protein sequence, read N- to C-terminus: Tropomyosin (284 aa).

Residues 1–284 (MDAIKKKMLM…DQALNELHNM (284 aa)) are a coiled coil. Disordered stretches follow at residues 106-134 (LNST…ENRQ) and 186-221 (AETK…EEAY). Basic and acidic residues-rich tracts occupy residues 112–134 (KLTD…ENRQ) and 186–198 (AETK…DELK).

Belongs to the tropomyosin family. As to quaternary structure, homodimer.

Functionally, tropomyosin, in association with the troponin complex, plays a central role in the calcium dependent regulation of muscle contraction. The sequence is that of Tropomyosin (TPM) from Branchiostoma belcheri (Amphioxus).